Consider the following 859-residue polypeptide: MVSIAFYGGIPGGISTPITQQSEKSKCEENTMFQPYCYNNDSKNSMAESKEARDQEMNLKEESKEEKRRNDWWKIGMFLLCLAGTTGGILWWYEGLPQQHYIGLVAIGGRLNGSGQSNAIECWGSFPGCRPFENYFSYETNRSMHMDNNTATLLEAYHREITFIYKSSCTDSDHCQEYQCKKVNLSSSDSSNSVRVEDVMNTTEYWGFKWLECNQTENFKTILVPENEMVNINDTDTWIPKGCNETWARVKRCPIDILYGIHPIRLCVQPPFFLVQEKGIANTSRIGNCGPTIFLGVLQDNKGVVRGDYTACNVSRLKIDRKDYTGIYQVPIFYTCTFTNITSCNNESIISVIMYETNQVQYLLCNNNNSNNYNCVVQSFGVIGQAHLELPRPNKRIRNQSFNQYNCSINNKTELETWKLVNTSGITPLPISSEANTGLIRHKRDFGISAIVAAIVAATAIAASATMSYVALTEVNKIMEVQNHTFEVENSTLNGMDLIERQIKILYAMILQTHADVQLLKERQQVEETFNLIGCIERTHVFCHTGHPWNMSWGHLNESTQWDDWVSKMEDLNQEILTILHGARNNLAQSMITFNTPDSIAQFGKDLWSHIGNWIPGLGASIIKYIVMFLLIYLLLTSSPKILRALWKVTSGAGSSGSRYLKKKFYHKHASREDTWDQAQHNIHLAGVTGGSGDKYCKQKYSRNDWNGESEEYNRRPKSWVKSIETFGESYISEKTKGEISQPGAAINEHKNGSGRNNPHQGSLDLEIRSEGGNIYDCCIKAQEGTLAIPCCGFPLWLFWGLVIIVGRIAGYGLRGLAVIIRICIRGLNLIFEIIRKMLDYIGRALNPGTSHVSMPQYV.

The propeptide occupies 1–6; sequence MVSIAF. The Extracellular segment spans residues 7–614; that stretch reads YGGIPGGIST…KDLWSHIGNW (608 aa). Residues asparagine 40, asparagine 112, asparagine 141, asparagine 148, asparagine 184, asparagine 201, asparagine 214, asparagine 233, asparagine 244, asparagine 282, asparagine 313, asparagine 340, asparagine 346, asparagine 368, asparagine 399, asparagine 406, asparagine 411, and asparagine 422 are each glycosylated (N-linked (GlcNAc...) asparagine; by host). The fusion peptide stretch occupies residues 446 to 466; the sequence is FGISAIVAAIVAATAIAASAT. Asparagine 483 and asparagine 490 each carry an N-linked (GlcNAc...) asparagine; by host glycan. An immunosuppression region spans residues 498–513; sequence LIERQIKILYAMILQT. Asparagine 550 and asparagine 557 each carry an N-linked (GlcNAc...) asparagine; by host glycan. Coiled coils occupy residues 576–624 and 663–699; these read ILTI…SIIK and KKFYHKHASREDTWDQAQHNIHLAGVTGGSGDKYCKQ. The chain crosses the membrane as a helical span at residues 615–635; it reads IPGLGASIIKYIVMFLLIYLL. Residues 636–859 are Cytoplasmic-facing; the sequence is LTSSPKILRA…TSHVSMPQYV (224 aa).

As to quaternary structure, the mature envelope protein (Env) consists of a trimer of SU-TM heterodimers attached by noncovalent interactions or by a labile interchain disulfide bond. In terms of processing, specific enzymatic cleavages in vivo yield mature proteins. Envelope glycoproteins are synthesized as an inactive precursor that is N-glycosylated and processed likely by host cell furin or by a furin-like protease in the Golgi to yield the mature SU and TM proteins. The cleavage site between SU and TM requires the minimal sequence [KR]-X-[KR]-R.

The protein localises to the virion membrane. Its subcellular location is the host cell membrane. The surface protein (SU) attaches the virus to the host cell by binding to its receptor. This interaction triggers the refolding of the transmembrane protein (TM) and is thought to activate its fusogenic potential by unmasking its fusion peptide. Fusion occurs at the host cell plasma membrane. Functionally, the transmembrane protein (TM) acts as a class I viral fusion protein. Under the current model, the protein has at least 3 conformational states: pre-fusion native state, pre-hairpin intermediate state, and post-fusion hairpin state. During viral and target cell membrane fusion, the coiled coil regions (heptad repeats) assume a trimer-of-hairpins structure, positioning the fusion peptide in close proximity to the C-terminal region of the ectodomain. The formation of this structure appears to drive apposition and subsequent fusion of viral and target cell membranes. Membranes fusion leads to delivery of the nucleocapsid into the cytoplasm. This chain is Envelope glycoprotein (env), found in Equus asinus (Donkey).